The chain runs to 124 residues: Small ribosomal subunit protein uS13 (124 aa).

Residues 95-124 are disordered; the sequence is GLPVRGQRTHTNARTRKGPRRSVMGKRKKA.

The protein belongs to the universal ribosomal protein uS13 family. As to quaternary structure, part of the 30S ribosomal subunit. Forms a loose heterodimer with protein S19. Forms two bridges to the 50S subunit in the 70S ribosome.

Functionally, located at the top of the head of the 30S subunit, it contacts several helices of the 16S rRNA. In the 70S ribosome it contacts the 23S rRNA (bridge B1a) and protein L5 of the 50S subunit (bridge B1b), connecting the 2 subunits; these bridges are implicated in subunit movement. Contacts the tRNAs in the A and P-sites. In Syntrophobacter fumaroxidans (strain DSM 10017 / MPOB), this protein is Small ribosomal subunit protein uS13.